Here is a 154-residue protein sequence, read N- to C-terminus: ATP synthase subunit b', chloroplastic (154 aa).

The helical transmembrane segment at 22–42 (GTLPLIAIQFLILMFLLNILL) threads the bilayer.

Belongs to the ATPase B chain family. F-type ATPases have 2 components, F(1) - the catalytic core - and F(0) - the membrane proton channel. F(1) has five subunits: alpha(3), beta(3), gamma(1), delta(1), epsilon(1). F(0) has four main subunits: a(1), b(1), b'(1) and c(10-14). The alpha and beta chains form an alternating ring which encloses part of the gamma chain. F(1) is attached to F(0) by a central stalk formed by the gamma and epsilon chains, while a peripheral stalk is formed by the delta, b and b' chains.

The protein localises to the plastid. The protein resides in the chloroplast thylakoid membrane. In terms of biological role, f(1)F(0) ATP synthase produces ATP from ADP in the presence of a proton or sodium gradient. F-type ATPases consist of two structural domains, F(1) containing the extramembraneous catalytic core and F(0) containing the membrane proton channel, linked together by a central stalk and a peripheral stalk. During catalysis, ATP synthesis in the catalytic domain of F(1) is coupled via a rotary mechanism of the central stalk subunits to proton translocation. Functionally, component of the F(0) channel, it forms part of the peripheral stalk, linking F(1) to F(0). The b'-subunit is a diverged and duplicated form of b found in plants and photosynthetic bacteria. The polypeptide is ATP synthase subunit b', chloroplastic (Vaucheria litorea (Yellow-green alga)).